Reading from the N-terminus, the 335-residue chain is Phosphatidylcholine:ceramide cholinephosphotransferase 2 (335 aa).

The next 5 helical transmembrane spans lie at Leu60–Ile80, Trp104–Leu124, Phe136–Pro156, Ile200–Val220, and Leu229–Val249. His210 is an active-site residue. Residues His253 and Asp257 contribute to the active site. The helical transmembrane segment at Val258–Met278 threads the bilayer. Topologically, residues Arg279 to Gln335 are cytoplasmic.

Belongs to the sphingomyelin synthase family.

It is found in the membrane. It catalyses the reaction an N-acylsphing-4-enine + a 1,2-diacyl-sn-glycero-3-phosphocholine = a sphingomyelin + a 1,2-diacyl-sn-glycerol. The catalysed reaction is an N-acyl-15-methylhexadecasphing-4-enine + a 1,2-diacyl-sn-glycero-3-phosphocholine = an N-acyl-15-methylhexadecasphing-4-enine-1-phosphocholine + a 1,2-diacyl-sn-glycerol. The protein operates within lipid metabolism; sphingolipid metabolism. Its function is as follows. Sphingomyelin synthases (SM synthase or SMS) synthesize the sphingolipid sphingomyelin (SM) through transfer of the phosphatidyl head group of 1,2-diacyl-sn-glycero-3-phosphocholine (phosphatidylcholine, PC) on to the primary hydroxyl of ceramide (N-acylsphingoid base), yielding 1,2-diacyl-sn-glycerol (diacylglycerol, DAG) as a side product. Functions as a bidirectional lipid cholinephosphotransferases capable of converting PC and ceramide to SM and DAG and vice versa depending on the respective levels of ceramide and DAG as phosphocholine acceptors, respectively. The protein is Phosphatidylcholine:ceramide cholinephosphotransferase 2 (sms-2) of Caenorhabditis elegans.